A 385-amino-acid chain; its full sequence is Putative UDP-N-acetylglucosamine 2-epimerase (385 aa).

It belongs to the UDP-N-acetylglucosamine 2-epimerase family.

It localises to the cytoplasm. It carries out the reaction UDP-N-acetyl-alpha-D-glucosamine = UDP-N-acetyl-alpha-D-mannosamine. This is Putative UDP-N-acetylglucosamine 2-epimerase from Clostridium acetobutylicum (strain ATCC 824 / DSM 792 / JCM 1419 / IAM 19013 / LMG 5710 / NBRC 13948 / NRRL B-527 / VKM B-1787 / 2291 / W).